Here is a 293-residue protein sequence, read N- to C-terminus: Glutamyl-Q tRNA(Asp) synthetase (293 aa).

L-glutamate contacts are provided by residues 26-30 (RYAPS) and Asp62. A 'HIGH' region motif is present at residues 29–39 (PSPTGALHLGN). Residues Cys118, Cys120, Tyr131, and Cys135 each coordinate Zn(2+). L-glutamate is bound by residues Tyr178 and Arg196. The 'KMSKS' region signature appears at 234 to 238 (KLSKR). Lys237 serves as a coordination point for ATP.

It belongs to the class-I aminoacyl-tRNA synthetase family. GluQ subfamily. The cofactor is Zn(2+).

Its function is as follows. Catalyzes the tRNA-independent activation of glutamate in presence of ATP and the subsequent transfer of glutamate onto a tRNA(Asp). Glutamate is transferred on the 2-amino-5-(4,5-dihydroxy-2-cyclopenten-1-yl) moiety of the queuosine in the wobble position of the QUC anticodon. This chain is Glutamyl-Q tRNA(Asp) synthetase, found in Parasynechococcus marenigrum (strain WH8102).